A 332-amino-acid chain; its full sequence is tRNA N6-adenosine threonylcarbamoyltransferase (332 aa).

2 residues coordinate Fe cation: histidine 107 and histidine 111. Residues leucine 129–glycine 133, aspartate 162, glycine 175, and asparagine 267 each bind substrate. Aspartate 295 contributes to the Fe cation binding site.

It belongs to the KAE1 / TsaD family. Fe(2+) serves as cofactor.

The protein localises to the cytoplasm. The catalysed reaction is L-threonylcarbamoyladenylate + adenosine(37) in tRNA = N(6)-L-threonylcarbamoyladenosine(37) in tRNA + AMP + H(+). Required for the formation of a threonylcarbamoyl group on adenosine at position 37 (t(6)A37) in tRNAs that read codons beginning with adenine. Is involved in the transfer of the threonylcarbamoyl moiety of threonylcarbamoyl-AMP (TC-AMP) to the N6 group of A37, together with TsaE and TsaB. TsaD likely plays a direct catalytic role in this reaction. The polypeptide is tRNA N6-adenosine threonylcarbamoyltransferase (Campylobacter hominis (strain ATCC BAA-381 / DSM 21671 / CCUG 45161 / LMG 19568 / NCTC 13146 / CH001A)).